We begin with the raw amino-acid sequence, 554 residues long: Glucose-6-phosphate isomerase (554 aa).

Glutamate 358 functions as the Proton donor in the catalytic mechanism. Catalysis depends on residues histidine 389 and lysine 515. A compositionally biased stretch (polar residues) spans 527–540; the sequence is ANNSPAPQSDSSTD. The segment at 527–554 is disordered; it reads ANNSPAPQSDSSTDALVRRYRSERGRTS. A compositionally biased stretch (basic and acidic residues) spans 542-554; the sequence is LVRRYRSERGRTS.

It belongs to the GPI family.

It is found in the cytoplasm. It carries out the reaction alpha-D-glucose 6-phosphate = beta-D-fructose 6-phosphate. Its pathway is carbohydrate biosynthesis; gluconeogenesis. The protein operates within carbohydrate degradation; glycolysis; D-glyceraldehyde 3-phosphate and glycerone phosphate from D-glucose: step 2/4. In terms of biological role, catalyzes the reversible isomerization of glucose-6-phosphate to fructose-6-phosphate. This Mycolicibacterium paratuberculosis (strain ATCC BAA-968 / K-10) (Mycobacterium paratuberculosis) protein is Glucose-6-phosphate isomerase.